The following is a 473-amino-acid chain: T-box transcription factor TBX6L (473 aa).

A DNA-binding region (T-box) is located at residues 43 to 217; it reads LWDKFSSIGT…NNPFAKGFRD (175 aa). Residues 342-361 form a disordered region; that stretch reads RLNPQETHHNSRPKIQLQPP.

In terms of tissue distribution, exclusively expressed by ventral mesendoderm.

It is found in the nucleus. In terms of biological role, probable transcriptional regulator involved in developmental processes. The sequence is that of T-box transcription factor TBX6L (tbx6l) from Danio rerio (Zebrafish).